The primary structure comprises 171 residues: Small ribosomal subunit protein uS5 (171 aa).

Residues 15–78 (LKDRLVAINR…EAAKKNLTRV (64 aa)) enclose the S5 DRBM domain.

This sequence belongs to the universal ribosomal protein uS5 family. As to quaternary structure, part of the 30S ribosomal subunit. Contacts proteins S4 and S8.

Its function is as follows. With S4 and S12 plays an important role in translational accuracy. Located at the back of the 30S subunit body where it stabilizes the conformation of the head with respect to the body. The chain is Small ribosomal subunit protein uS5 from Phocaeicola vulgatus (strain ATCC 8482 / DSM 1447 / JCM 5826 / CCUG 4940 / NBRC 14291 / NCTC 11154) (Bacteroides vulgatus).